The primary structure comprises 274 residues: Orotidine 5'-phosphate decarboxylase (274 aa).

Substrate-binding positions include D40, 62–64 (KTH), 93–102 (DRKFIDIGNT), Y227, and R245. Residue K95 is the Proton donor of the active site.

Belongs to the OMP decarboxylase family.

The enzyme catalyses orotidine 5'-phosphate + H(+) = UMP + CO2. It participates in pyrimidine metabolism; UMP biosynthesis via de novo pathway; UMP from orotate: step 2/2. In Emericella nidulans (strain FGSC A4 / ATCC 38163 / CBS 112.46 / NRRL 194 / M139) (Aspergillus nidulans), this protein is Orotidine 5'-phosphate decarboxylase (pyrG).